The chain runs to 715 residues: Methylmalonyl-CoA mutase large subunit (715 aa).

Residues Tyr-70, Met-73, Arg-77, Thr-80, Arg-82, Tyr-84, and Ser-109 each contribute to the (R)-methylmalonyl-CoA site. Cob(II)alamin contacts are provided by Phe-112 and Ala-134. Positions 190 and 192 each coordinate (R)-methylmalonyl-CoA. Val-201 and Arg-202 together coordinate cob(II)alamin. Residues Arg-202, His-239, Arg-278, and Ser-280 each coordinate (R)-methylmalonyl-CoA. Residues Gly-328, Glu-365, Ala-368, Gly-599, His-600, Asp-601, Arg-602, Ser-645, Leu-647, Gly-676, and Thr-699 each contribute to the cob(II)alamin site. The region spanning 587–715 (QPRIMIAKMG…AKVLEILLEE (129 aa)) is the B12-binding domain.

Belongs to the methylmalonyl-CoA mutase family. Heterodimer of an alpha and a beta chain. It depends on adenosylcob(III)alamin as a cofactor.

The catalysed reaction is (R)-methylmalonyl-CoA = succinyl-CoA. Functionally, catalyzes the isomerization of succinyl-CoA to methylmalonyl-CoA during synthesis of propionate from tricarboxylic acid-cycle intermediates. This Porphyromonas gingivalis (strain ATCC BAA-308 / W83) protein is Methylmalonyl-CoA mutase large subunit (mutB).